A 452-amino-acid polypeptide reads, in one-letter code: Zinc finger protein 672 (452 aa).

4 C2H2-type zinc fingers span residues 14 to 36, 42 to 64, 70 to 92, and 99 to 122; these read YSCS…ERAH, FRCL…RRTH, YICS…LGAH, and CPCR…RRQH. The C2H2-type 5; degenerate zinc finger occupies 128-150; the sequence is RRCPLCARTFRQSALLFHQARAH. 9 C2H2-type zinc fingers span residues 163-185, 199-221, 227-249, 255-277, 283-305, 311-333, 339-361, 367-389, and 395-417; these read HRCA…ARIH, HQCG…LQTH, FKCP…QRTH, YACG…RRSH, HACA…QRIH, FACP…RRTH, YRCE…RRNH, HKCP…RKTH, and AECA…QRAH.

This sequence belongs to the krueppel C2H2-type zinc-finger protein family.

It is found in the nucleus. Its function is as follows. May be involved in transcriptional regulation. The polypeptide is Zinc finger protein 672 (Homo sapiens (Human)).